The chain runs to 389 residues: Alanine racemase (389 aa).

Lysine 48 functions as the Proton acceptor; specific for D-alanine in the catalytic mechanism. N6-(pyridoxal phosphate)lysine is present on lysine 48. Arginine 144 provides a ligand contact to substrate. Tyrosine 281 (proton acceptor; specific for L-alanine) is an active-site residue. Position 329 (methionine 329) interacts with substrate.

The protein belongs to the alanine racemase family. It depends on pyridoxal 5'-phosphate as a cofactor.

It carries out the reaction L-alanine = D-alanine. The protein operates within amino-acid biosynthesis; D-alanine biosynthesis; D-alanine from L-alanine: step 1/1. Catalyzes the interconversion of L-alanine and D-alanine. May also act on other amino acids. The chain is Alanine racemase (alr) from Leptospira interrogans serogroup Icterohaemorrhagiae serovar copenhageni (strain Fiocruz L1-130).